The following is a 182-amino-acid chain: Fucoxanthin-chlorophyll a-c binding protein D, chloroplastic (182 aa).

A chloroplast-targeting transit peptide spans 1–4; sequence AMKM. Helical transmembrane passes span 46–66, 87–107, and 148–168; these read IAML…PGML, IPPG…LAVM, and GRAA…NNKP.

The protein belongs to the fucoxanthin chlorophyll protein family. The LHC complex of chromophytic algae is composed of fucoxanthin, chlorophyll A and C bound non-covalently by fucoxanthin chlorophyll proteins (FCPs). The ratio of pigments in this LHC is; fucoxanthin: chlorophyll C: chlorophyll A; (0.6-1): (0.1-0.3): (1).

It localises to the plastid. It is found in the chloroplast thylakoid membrane. The light-harvesting complex (LHC) functions as a light receptor, it captures and delivers excitation energy to photosystems with which it is closely associated. Energy is transferred from the carotenoid and chlorophyll C (or B) to chlorophyll A and the photosynthetic reaction centers where it is used to synthesize ATP and reducing power. The chain is Fucoxanthin-chlorophyll a-c binding protein D, chloroplastic (FCPD) from Macrocystis pyrifera (Giant kelp).